A 181-amino-acid polypeptide reads, in one-letter code: SRP-independent targeting protein 2 (181 aa).

The Cytoplasmic segment spans residues 1 to 15 (MAGKAGRKQASSNAK). Residues 16-36 (IIQGLYKQVSLFLGMAIVRLF) traverse the membrane as a helical segment. The Lumenal segment spans residues 37–45 (ISRKVTIGQ). Residues 46-66 (WIKLVALNVPMFVALYIIVLS) form a helical membrane-spanning segment. Topologically, residues 67–89 (GKPKYDGNRVVKQGIDLNDNTNL) are cytoplasmic. The helical transmembrane segment at 90 to 110 (ISYFFDLIYLSLFGNIGIIAF) threads the bilayer. The Lumenal portion of the chain corresponds to 111–112 (RT). Residues 113 to 133 (FKFWWCLLLCPIYAGYKLYGL) traverse the membrane as a helical segment. Topologically, residues 134-181 (KNMFMPGAQQTQADNRSKNANEGQSKSKRQMKRERRGETDSKIKYKYR) are cytoplasmic. The segment covering 144 to 157 (TQADNRSKNANEGQ) has biased composition (polar residues). The tract at residues 144–181 (TQADNRSKNANEGQSKSKRQMKRERRGETDSKIKYKYR) is disordered. The span at 168 to 181 (RRGETDSKIKYKYR) shows a compositional bias: basic and acidic residues.

It belongs to the TMEM208 family. Interacts with SND1, PHO88/SND3 and the translocon complex subunit SEC61. ENV10/SND2 and PHO88/SND3 form a complex with the translocon in the endoplasmic reticulum membrane.

It is found in the endoplasmic reticulum membrane. Its function is as follows. Functions in the SND pathway, a SRP (signal recognition particle) and GET (guided entry of tail-anchored proteins) independent pathway for targeting a broad range of substrate proteins to the endoplasmic reticulum. SND functions in parallel to GET in targeting proteins with downstream hydrophobic motifs. Involved in vacuolar processing and morphology. This chain is SRP-independent targeting protein 2, found in Saccharomyces cerevisiae (strain ATCC 204508 / S288c) (Baker's yeast).